A 551-amino-acid polypeptide reads, in one-letter code: NAD(P)H-quinone oxidoreductase chain 4 (551 aa).

The next 14 membrane-spanning stretches (helical) occupy residues 25 to 45 (FPWL…VPFI), 56 to 76 (WFAL…YLNG), 111 to 131 (LILL…PVTF), 133 to 153 (PKLF…VFAV), 157 to 177 (LLFF…LAIW), 189 to 209 (FILY…AMGF), 233 to 253 (LLCY…VPLH), 264 to 284 (TAPV…YALM), 298 to 318 (FAPL…LTSF), 335 to 355 (MGFV…GAML), 356 to 376 (QMIS…ATYD), 397 to 417 (FALW…SGFV), 438 to 458 (IVID…LLSM), and 485 to 505 (VYII…PRLM).

The protein belongs to the complex I subunit 4 family.

Its subcellular location is the cellular thylakoid membrane. The catalysed reaction is a plastoquinone + NADH + (n+1) H(+)(in) = a plastoquinol + NAD(+) + n H(+)(out). The enzyme catalyses a plastoquinone + NADPH + (n+1) H(+)(in) = a plastoquinol + NADP(+) + n H(+)(out). NDH-1 shuttles electrons from NAD(P)H, via FMN and iron-sulfur (Fe-S) centers, to quinones in the respiratory chain. The immediate electron acceptor for the enzyme in this species is believed to be plastoquinone. Couples the redox reaction to proton translocation (for every two electrons transferred, four hydrogen ions are translocated across the cytoplasmic membrane), and thus conserves the redox energy in a proton gradient. This chain is NAD(P)H-quinone oxidoreductase chain 4, found in Synechococcus sp. (strain WH7803).